The following is a 156-amino-acid chain: Small ribosomal subunit protein uS7 (156 aa).

It belongs to the universal ribosomal protein uS7 family. As to quaternary structure, part of the 30S ribosomal subunit. Contacts proteins S9 and S11.

Its function is as follows. One of the primary rRNA binding proteins, it binds directly to 16S rRNA where it nucleates assembly of the head domain of the 30S subunit. Is located at the subunit interface close to the decoding center, probably blocks exit of the E-site tRNA. The polypeptide is Small ribosomal subunit protein uS7 (Vibrio vulnificus (strain CMCP6)).